A 492-amino-acid polypeptide reads, in one-letter code: Catalase isozyme 1 (492 aa).

Active-site residues include His-65 and Asn-138. Tyr-348 contacts heme.

The protein belongs to the catalase family. As to quaternary structure, homotetramer. Heme serves as cofactor. High expression in seeds and early seedlings.

It is found in the glyoxysome. The catalysed reaction is 2 H2O2 = O2 + 2 H2O. Occurs in almost all aerobically respiring organisms and serves to protect cells from the toxic effects of hydrogen peroxide. The protein is Catalase isozyme 1 (CAT1) of Cucurbita pepo (Vegetable marrow).